The following is a 331-amino-acid chain: Protein Brevis radix-like 1 (331 aa).

Positions 1–111 are disordered; it reads MFTCINCTKM…HQSGRPDSRF (111 aa). 2 stretches are compositionally biased toward polar residues: residues 25–41 and 48–66; these read STTPNTKEAVKSLTTQI and FSGSHKQSKPTPGSSSSNL. The region spanning 137-192 is the BRX 1 domain; sequence KEWMAQVEPGVHITFVSLPSGGNDLKRIRFSREVFDKWQAQRWWGENYDRIVELYN. 2 disordered regions span residues 201–246 and 258–279; these read LQTP…VPHH and TTSSRDEPPSMSNASEMQGEWV. Basic and acidic residues predominate over residues 221–235; that stretch reads DSARESRDWTQRDNN. The region spanning 276 to 331 is the BRX 2 domain; the sequence is GEWVEEDEPGVYITIRQLPDGTRELRRVRFSRERFGEVHAKTWWEQNRDRIQTQYL.

This sequence belongs to the BRX family. In terms of assembly, heterodimer with BRXL1. In terms of tissue distribution, expressed in roots.

It localises to the nucleus. May act as a regulator of cell proliferation and elongation in the root. The chain is Protein Brevis radix-like 1 (BRXL1) from Arabidopsis thaliana (Mouse-ear cress).